We begin with the raw amino-acid sequence, 1167 residues long: DNA-directed RNA polymerase subunit beta (1167 aa).

It belongs to the RNA polymerase beta chain family. As to quaternary structure, the RNAP catalytic core consists of 2 alpha, 1 beta, 1 beta' and 1 omega subunit. When a sigma factor is associated with the core the holoenzyme is formed, which can initiate transcription.

The enzyme catalyses RNA(n) + a ribonucleoside 5'-triphosphate = RNA(n+1) + diphosphate. Functionally, DNA-dependent RNA polymerase catalyzes the transcription of DNA into RNA using the four ribonucleoside triphosphates as substrates. The chain is DNA-directed RNA polymerase subunit beta from Treponema denticola (strain ATCC 35405 / DSM 14222 / CIP 103919 / JCM 8153 / KCTC 15104).